Here is a 621-residue protein sequence, read N- to C-terminus: Lamin-C (621 aa).

The tract at residues 1-47 (MSARRVTLNTRVSRASTSTPVGGASTSSRVGATSPTSPTRTSRQQEK) is disordered. The tract at residues 1-47 (MSARRVTLNTRVSRASTSTPVGGASTSSRVGATSPTSPTRTSRQQEK) is head. Positions 7-31 (TLNTRVSRASTSTPVGGASTSSRVG) are enriched in polar residues. Low complexity predominate over residues 33 to 42 (TSPTSPTRTS). Ser34 is subject to Phosphoserine. The IF rod domain maps to 46-402 (EKEELQHLND…KLLCGEERRL (357 aa)). The coil 1A stretch occupies residues 47–85 (KEELQHLNDRLACYIDRMRNLENENSRLTQELNLAQDTV). The interval 86-95 (NRETSNLKAV) is linker 1. The segment at 96–233 (YEKELAAARK…QVHTQELTET (138 aa)) is coil 1B. Positions 234–257 (RSRRQIEISEIDGRLSRQYEAKLQ) are linker 2. Positions 258–403 (QSLQELRDQY…LLCGEERRLN (146 aa)) are coil 2. A disordered region spans residues 404-458 (IESPGRPTTDSGISSNGSHLTASASSRSGRVTPSGRRSATPGISGSSAVKRRRTV). Positions 404-621 (IESPGRPTTD…GVRSLFSLLF (218 aa)) are tail. 2 positions are modified to phosphoserine: Ser406 and Ser441. Over residues 409 to 450 (RPTTDSGISSNGSHLTASASSRSGRVTPSGRRSATPGISGSS) the composition is skewed to polar residues. Thr443 is modified (phosphothreonine). Residues 453–458 (KRRRTV) carry the Nuclear localization signal motif. In terms of domain architecture, LTD spans 468-582 (SEYSVNAAAK…EDVASYDRVR (115 aa)). Positions 585–605 (VSSHTSRHRSSGTPSTGFTLG) are disordered.

It belongs to the intermediate filament family. In terms of assembly, interacts with MAN1. As to expression, first detected from late stage 12 in the oenocytes, abdominal segments, hindgut and posterior spiracles, with expression increasing in stage 13 (at protein level). In stage 14, also becomes detectable in the foregut (at protein level). Stage 15 shows expression in the epidermis, dorsal longitudinal trunk, pharynx, esophagus and proventriculus, with the dorsal pharyngeal musculature showing expression in late stage 15 (at protein level). In stage 16 embryos, also detected in the exit glia with increasing expression in the somatic musculature (at protein level). Also detected in the visceral mesoderm but not in the midgut or central nervous system until the end of embryogenesis (at protein level). In third instar larvae, detectable at varying levels in all cell types (at protein level). Expressed in spermatocytes (at protein level).

The protein resides in the nucleus. The protein localises to the nucleus lamina. Functionally, lamins are components of the nuclear lamina, a fibrous layer on the nucleoplasmic side of the inner nuclear membrane, which is thought to provide a framework for the nuclear envelope and may also interact with chromatin. In spermatocytes, regulates cytokinesis during meiosis. The chain is Lamin-C (LamC) from Drosophila melanogaster (Fruit fly).